A 254-amino-acid chain; its full sequence is rRNA N-glycosylase sapovaccarin-S2 (254 aa).

Belongs to the ribosome-inactivating protein family. Type 1 RIP subfamily. In terms of tissue distribution, expressed in seeds; most abundant in the perisperm.

The enzyme catalyses Endohydrolysis of the N-glycosidic bond at one specific adenosine on the 28S rRNA.. Exhibits N-glycosylase activity. Catalyzes the release of one adenine from a ribosome. Acts as a ribosome-inactivating protein and inhibits protein synthesis. Induces cell death in Huh-7 liver cells. May contribute to the protection against plant pests and predators or play a role in regulating the death of plant cells. This Gypsophila vaccaria (Cow soapwort) protein is rRNA N-glycosylase sapovaccarin-S2.